Consider the following 119-residue polypeptide: Large ribosomal subunit protein bL20 (119 aa).

This sequence belongs to the bacterial ribosomal protein bL20 family.

In terms of biological role, binds directly to 23S ribosomal RNA and is necessary for the in vitro assembly process of the 50S ribosomal subunit. It is not involved in the protein synthesizing functions of that subunit. This chain is Large ribosomal subunit protein bL20, found in Brevibacillus brevis (strain 47 / JCM 6285 / NBRC 100599).